The following is a 236-amino-acid chain: MKLNISYPANGTQKSIDIDDEHKLRVFYEKRMGQEVEGDSVGDEFKGYIFKITGGNDKQGFPMKQGVMHPTRVRLLLSKGHSCYRPRRTGERKRKSVRGCIVAQDLSVLALSIVKQGDNEIEGLTDTTVPKRLGPKRANHIRKFFGLTKEDDVRDFVVRREVTKGDKTYTKAPKIQRLVTPQTLQRKRALKAKKVKNAQQQRDAAAEYAQLLAKRLHERKEERAEIKKKRAESLKN.

The protein belongs to the eukaryotic ribosomal protein eS6 family. In terms of assembly, component of the small ribosomal subunit. Mature ribosomes consist of a small (40S) and a large (60S) subunit. The 40S subunit contains about 32 different proteins and 1 molecule of RNA (18S). The 60S subunit contains 45 different proteins and 3 molecules of RNA (25S, 5.8S and 5S).

The protein resides in the cytoplasm. Its function is as follows. Component of the ribosome, a large ribonucleoprotein complex responsible for the synthesis of proteins in the cell. The small ribosomal subunit (SSU) binds messenger RNAs (mRNAs) and translates the encoded message by selecting cognate aminoacyl-transfer RNA (tRNA) molecules. The large subunit (LSU) contains the ribosomal catalytic site termed the peptidyl transferase center (PTC), which catalyzes the formation of peptide bonds, thereby polymerizing the amino acids delivered by tRNAs into a polypeptide chain. The nascent polypeptides leave the ribosome through a tunnel in the LSU and interact with protein factors that function in enzymatic processing, targeting, and the membrane insertion of nascent chains at the exit of the ribosomal tunnel. RPS6A is involved in nucleolar processing of pre-18S ribosomal RNA and ribosome assembly. This chain is Small ribosomal subunit protein eS6 (RPS6A), found in Candida albicans (strain SC5314 / ATCC MYA-2876) (Yeast).